The primary structure comprises 288 residues: Syntaxin-1A (288 aa).

The Cytoplasmic portion of the chain corresponds to 1–265; that stretch reads MKDRTQELRT…KYQSKARRKK (265 aa). Residues Ser14, Ser64, and Ser95 each carry the phosphoserine modification. Residues 68–109 are a coiled coil; it reads DEKTKEELEELMSDIKKTANKVRSKLKSIEQSIEQEEGLNRS. Ser188 is modified (phosphoserine; by DAPK1). A t-SNARE coiled-coil homology domain is found at 192 to 254; the sequence is LSEIETRHSE…ERAVSDTKKA (63 aa). Glycyl lysine isopeptide (Lys-Gly) (interchain with G-Cter in SUMO) cross-links involve residues Lys252, Lys253, and Lys256. Residues 266-286 form a helical; Anchor for type IV membrane protein membrane-spanning segment; that stretch reads IMIIICCVIPGIVIASTVGGI. The Extracellular portion of the chain corresponds to 287-288; it reads FA.

The protein belongs to the syntaxin family. Part of the SNARE core complex containing SNAP25, VAMP2 and STX1A; this complex constitutes the basic catalytic machinery of the complex neurotransmitter release apparatus. The SNARE complex interacts with CPLX1. Interacts with STXBP1. The interaction with STXBP1 promotes assembly of the SNARE complex. Interacts (via C-terminus) with KCNB1 (via C-terminus); the interaction increases in a calcium-dependent manner and induces a pore-independent enhancement of exocytosis in neuroendocrine cells, chromaffin cells, pancreatic beta cells and from the soma of dorsal root ganglia (DRG) neurons. Interacts with SYTL4. Interacts with STXBP6. Interacts with PLCL1 (via C2 domain). Interacts with OTOF. Interacts with LGI3. Interacts (via the H3 domain) with SLC6A4 (via the N-terminus); this interaction regulates SLC4A6 channel conductance in thalamocortical neurons. Interacts with SYT6 and SYT8; the interaction is Ca(2+)-dependent. Interacts with VAMP8. Interacts with SNAP23. Interacts with VAPA and SYBU. Interacts with PRRT2. Interacts with SEPT8. Interacts with STXBP5L. Interacts with synaptotagmin-1/SYT1. Interacts with SEPTIN5; in the cerebellar cortex. Interacts with SEPTIN4; in the striatum. Phosphorylated by CK2. Phosphorylation at Ser-188 by DAPK1 significantly decreases its interaction with STXBP1. Post-translationally, sumoylated, sumoylation is required for regulation of synaptic vesicle endocytosis.

It is found in the cytoplasmic vesicle. The protein resides in the secretory vesicle. The protein localises to the synaptic vesicle membrane. Its subcellular location is the cell membrane. It localises to the synapse. It is found in the synaptosome. Plays an essential role in hormone and neurotransmitter calcium-dependent exocytosis and endocytosis. Part of the SNARE (Soluble NSF Attachment Receptor) complex composed of SNAP25, STX1A and VAMP2 which mediates the fusion of synaptic vesicles with the presynaptic plasma membrane. STX1A and SNAP25 are localized on the plasma membrane while VAMP2 resides in synaptic vesicles. The pairing of the three SNAREs from the N-terminal SNARE motifs to the C-terminal anchors leads to the formation of the SNARE complex, which brings membranes into close proximity and results in final fusion. Participates in the calcium-dependent regulation of acrosomal exocytosis in sperm. Also plays an important role in the exocytosis of hormones such as insulin or glucagon-like peptide 1 (GLP-1). This is Syntaxin-1A (STX1A) from Pongo abelii (Sumatran orangutan).